A 772-amino-acid polypeptide reads, in one-letter code: Tubulin monoglycylase TTLL3 (772 aa).

The interval 50 to 81 (PTLLPPQKDLDSSAMGDSDTTEDEDEDEDEEF) is disordered. Residues 68 to 81 (DTTEDEDEDEDEEF) are compositionally biased toward acidic residues. The region spanning 151 to 510 (ARNVLKLVVK…RMLDRNCDTG (360 aa)) is the TTL domain. Residues Lys-283, 289–290 (RG), 321–324 (QKYI), 334–336 (KFD), and 378–379 (CN) contribute to the ATP site. Arg-289 contributes to the a protein binding site. Ser-381 is a binding site for L-glutamate. Positions 456, 469, and 471 each coordinate Mg(2+). An ATP-binding site is contributed by Glu-469.

It depends on Mg(2+) as a cofactor. In terms of tissue distribution, expressed in brain, heart, kidney, testis, liver, lung, muscle, spleen, trachea and colon.

It localises to the cytoplasm. The protein resides in the cytoskeleton. The protein localises to the cell projection. Its subcellular location is the cilium. It is found in the cilium axoneme. It localises to the flagellum axoneme. The catalysed reaction is L-glutamyl-[protein] + glycine + ATP = glycyl-L-glutamyl-[protein] + ADP + phosphate + H(+). Its function is as follows. Monoglycylase which modifies alpha- and beta-tubulin, adding a single glycine on the gamma-carboxyl groups of specific glutamate residues to generate monoglycine side chains within the C-terminal tail of tubulin. Not involved in elongation step of the polyglycylation reaction. Preferentially glycylates a beta-tail peptide over the alpha-tail, although shifts its preference toward alpha-tail as beta-tail glutamylation increases. Competes with polyglutamylases for modification site on beta-tubulin substrate, thereby creating an anticorrelation between glycylation and glutamylation reactions. Together with TTLL8, mediates microtubule glycylation of primary and motile cilia, which is essential for their stability and maintenance. Involved in microtubule glycylation of primary cilia in colon which controls cell proliferation of epithelial cells and plays an essential role in colon cancer development. Together with TTLL8, glycylates sperm flagella which regulates axonemal dynein motor activity, thereby controlling flagellar beat, directional sperm swimming and male fertility. The sequence is that of Tubulin monoglycylase TTLL3 from Homo sapiens (Human).